The following is a 218-amino-acid chain: Small ribosomal subunit protein uS3 (218 aa).

A KH type-2 domain is found at 39–107; the sequence is IRDYIKSKLL…QISINIVEIK (69 aa).

It belongs to the universal ribosomal protein uS3 family. In terms of assembly, part of the 30S ribosomal subunit. Forms a tight complex with proteins S10 and S14.

Binds the lower part of the 30S subunit head. Binds mRNA in the 70S ribosome, positioning it for translation. The chain is Small ribosomal subunit protein uS3 from Desulforudis audaxviator (strain MP104C).